Consider the following 122-residue polypeptide: Large ribosomal subunit protein uL14c (122 aa).

The protein belongs to the universal ribosomal protein uL14 family. As to quaternary structure, part of the 50S ribosomal subunit.

It is found in the plastid. It localises to the chloroplast. Functionally, binds to 23S rRNA. The polypeptide is Large ribosomal subunit protein uL14c (Vitis vinifera (Grape)).